We begin with the raw amino-acid sequence, 148 residues long: UPF0591 membrane protein C15E1.02c (148 aa).

3 helical membrane-spanning segments follow: residues 14 to 34 (AILL…GPLM), 80 to 102 (LLQL…VFGA), and 122 to 142 (ILVK…ALIG).

It belongs to the UPF0591 family.

Its subcellular location is the membrane. The chain is UPF0591 membrane protein C15E1.02c from Schizosaccharomyces pombe (strain 972 / ATCC 24843) (Fission yeast).